The primary structure comprises 383 residues: Seipin (383 aa).

Residues 1–27 lie on the Cytoplasmic side of the membrane; sequence MVNDPPVPALLWAQEVGHVLAGRARRL. Residues 28-48 form a helical membrane-spanning segment; that stretch reads MLQFGVLFCTILLLLWVSVFL. At 49-242 the chain is on the lumenal side; that stretch reads YGSFYYSYMP…TCAFVGVASN (194 aa). 2 N-linked (GlcNAc...) asparagine glycosylation sites follow: N88 and N242. A helical transmembrane segment spans residues 243–263; it reads FTFLSVIVLFSYMQWVWGAVW. The Cytoplasmic portion of the chain corresponds to 264 to 383; that stretch reads PRHRFSLQVN…LRQRPTCSSS (120 aa). A disordered region spans residues 279–383; the sequence is NSHHGAPRRI…LRQRPTCSSS (105 aa). At S289 the chain carries Phosphoserine. Positions 292–302 are enriched in polar residues; the sequence is QPGQESTQQSD. The segment covering 322-332 has biased composition (basic and acidic residues); sequence EEEKPEKRPLN. A phosphoserine mark is found at S342 and S345. The span at 353–371 shows a compositional bias: low complexity; that stretch reads TEANPPTSASASALAPETL.

The protein belongs to the seipin family. In terms of assembly, undecamer (an oligomer having eleven subunits). Oligomerization is important for its function in lipid droplet formation. Interacts with LDAF1 to form an oligomeric complex. Interacts with RAB18. Interacts with ZFYVE1 in a RAB18-dependent manner. As to expression, expressed in the paraventricular nucleus of the hypothalamus (PVN) and brainstem dorsal vagal complex (DVC) in oxytocin and catecholaminergic neurons (at protein level). Highest expression detected in subcutaneous and epididymal white adipose tissue, brown adipose tissue and testis. Also expressed in brain, skeletal muscle and adrenal gland, with lower levels detected in liver, heart, kidney, spleen, lung and small intestine. In brain, detected in piriform cortex, olfactory tubercle, islands of Calleja, lateral septal nucleus, medial septal nucleus, nucleus of the vertical limb of the diagonal band, nucleus of the horizontal limb of the diagonal band, preoptic area, paraventricular thalamic nucleus, lateral globus pallidus, supraoptic nucleus, suprachiasmatic nucleus, subfornical organ, paraventricular nucleus of the hypothalamus, zona incerta, dorsomedial nucleus of the hypothalamus, ventromedial nucleus of the hypothalamus, arcuate nucleus of the hypothalamus, basomedial amygdaloid nucleus, medial amygdaloid nucleus, medial habenular, pyramidal cell layer of the hippocampus, granular layer of the dentate gyrus, posterior hypothalamus, supramammilliary nucleus, premammillary nucleus, nucleus of Darkschewitsch, Edinger-Westphal nucleus, ventral tegmental area, dorsal raphe nucleus, periaqueductal gray, median raphe nucleus, lateral parabrachial nucleus, dorsal tegmental nucleus, laterodorsal tegmental nucleus, locus coeruleus, Barrington's nucleus, medial vestibular nucleus, ambiguous nucleus, dorsal vagal complex and hypoglossal nucleus.

Its subcellular location is the endoplasmic reticulum membrane. The protein resides in the lipid droplet. Its function is as follows. Plays a crucial role in the formation of lipid droplets (LDs) which are storage organelles at the center of lipid and energy homeostasis. In association with LDAF1, defines the sites of LD formation in the ER. Also required for growth and maturation of small nascent LDs into larger mature LDs. Mediates the formation and/or stabilization of endoplasmic reticulum-lipid droplets (ER-LD) contacts, facilitating protein and lipid delivery from the ER into growing LDs. Regulates the maturation of ZFYVE1-positive nascent LDs and the function of the RAB18-ZFYVE1 complex in mediating the formation of ER-LD contacts. Binds anionic phospholipids including phosphatidic acid. Plays an important role in the differentiation and development of adipocytes. The protein is Seipin of Mus musculus (Mouse).